Reading from the N-terminus, the 37-residue chain is Large ribosomal subunit protein bL36 (37 aa).

The protein belongs to the bacterial ribosomal protein bL36 family.

The polypeptide is Large ribosomal subunit protein bL36 (Dictyoglomus thermophilum (strain ATCC 35947 / DSM 3960 / H-6-12)).